The chain runs to 433 residues: Ribosomal RNA small subunit methyltransferase B (433 aa).

S-adenosyl-L-methionine contacts are provided by residues 254–260 (CAAPGGK), Asp277, Asp303, and Asp322. Cys375 functions as the Nucleophile in the catalytic mechanism.

Belongs to the class I-like SAM-binding methyltransferase superfamily. RsmB/NOP family.

Its subcellular location is the cytoplasm. It catalyses the reaction cytidine(967) in 16S rRNA + S-adenosyl-L-methionine = 5-methylcytidine(967) in 16S rRNA + S-adenosyl-L-homocysteine + H(+). Its function is as follows. Specifically methylates the cytosine at position 967 (m5C967) of 16S rRNA. This is Ribosomal RNA small subunit methyltransferase B from Sodalis glossinidius (strain morsitans).